Consider the following 241-residue polypeptide: Uridylate kinase (241 aa).

An ATP-binding site is contributed by 12–15; that stretch reads KLSG. Position 54 (glycine 54) interacts with UMP. ATP is bound by residues glycine 55 and arginine 59. UMP is bound by residues aspartate 74 and 135–142; that span reads VGAPYFTT. Residues threonine 162, tyrosine 168, and aspartate 171 each contribute to the ATP site.

Belongs to the UMP kinase family. As to quaternary structure, homohexamer.

The protein localises to the cytoplasm. The catalysed reaction is UMP + ATP = UDP + ADP. The protein operates within pyrimidine metabolism; CTP biosynthesis via de novo pathway; UDP from UMP (UMPK route): step 1/1. With respect to regulation, inhibited by UTP. Catalyzes the reversible phosphorylation of UMP to UDP. In Sphingopyxis alaskensis (strain DSM 13593 / LMG 18877 / RB2256) (Sphingomonas alaskensis), this protein is Uridylate kinase.